The following is a 106-amino-acid chain: Colipase A (106 aa).

The first 11 residues, 1–11 (LLLVALAVAYA), serve as a signal peptide directing secretion. The propeptide at 12-16 (VPDPR) is enterostatin, activation peptide. 5 disulfide bridges follow: C28–C39, C34–C50, C38–C72, C60–C80, and C74–C98. W63 provides a ligand contact to taurodeoxycholate.

This sequence belongs to the colipase family. As to quaternary structure, forms a 1:1 stoichiometric complex with pancreatic lipase. As to expression, expressed by the pancreas.

The protein resides in the secreted. Colipase is a cofactor of pancreatic lipase. It allows the lipase to anchor itself to the lipid-water interface. Without colipase the enzyme is washed off by bile salts, which have an inhibitory effect on the lipase. In terms of biological role, enterostatin has a biological activity as a satiety signal. This Equus caballus (Horse) protein is Colipase A (CLPS1).